Reading from the N-terminus, the 680-residue chain is DNA ligase (680 aa).

Residues 38-42 (DAEYD), 87-88 (SL), and Glu-119 each bind NAD(+). The N6-AMP-lysine intermediate role is filled by Lys-121. NAD(+)-binding residues include Arg-142, Glu-179, Lys-296, and Lys-320. 4 residues coordinate Zn(2+): Cys-414, Cys-417, Cys-432, and Cys-438. The 84-residue stretch at 597-680 (IEDLPLKGLT…DLLRKHGRLE (84 aa)) folds into the BRCT domain.

It belongs to the NAD-dependent DNA ligase family. LigA subfamily. Mg(2+) serves as cofactor. Mn(2+) is required as a cofactor.

It carries out the reaction NAD(+) + (deoxyribonucleotide)n-3'-hydroxyl + 5'-phospho-(deoxyribonucleotide)m = (deoxyribonucleotide)n+m + AMP + beta-nicotinamide D-nucleotide.. DNA ligase that catalyzes the formation of phosphodiester linkages between 5'-phosphoryl and 3'-hydroxyl groups in double-stranded DNA using NAD as a coenzyme and as the energy source for the reaction. It is essential for DNA replication and repair of damaged DNA. The sequence is that of DNA ligase from Cellvibrio japonicus (strain Ueda107) (Pseudomonas fluorescens subsp. cellulosa).